The sequence spans 161 residues: Glycine/sarcosine/betaine reductase complex component A2 (161 aa).

Residue Sec-42 is part of the active site. A non-standard amino acid (selenocysteine) is located at residue Sec-42.

The protein belongs to the GrdA family. Monomer. Component of the glycine, sarcosine and betaine reductase complexes, together with components B and C.

It catalyses the reaction acetyl phosphate + [thioredoxin]-disulfide + NH4(+) + H2O = [thioredoxin]-dithiol + glycine + phosphate + H(+). The enzyme catalyses acetyl phosphate + methylamine + [thioredoxin]-disulfide + H2O = sarcosine + [thioredoxin]-dithiol + phosphate + H(+). It carries out the reaction acetyl phosphate + trimethylamine + [thioredoxin]-disulfide + H2O = glycine betaine + [thioredoxin]-dithiol + phosphate + H(+). In terms of biological role, in the first step of glycine, betaine and sarcosine reductases, the substrate is bound to component PB via a Schiff base intermediate. Then the PB-activated substrate is nucleophilically attacked by the selenol anion of component PA to transform it to a carboxymethylated selenoether and the respective amine. By action of component PC, acetyl phosphate is formed, leaving component PA in its oxidized state. Finally component PA becomes reduced by the thioredoxin system to start a new catalytic cycle of reductive deamination. The sequence is that of Glycine/sarcosine/betaine reductase complex component A2 (grdA2) from Photobacterium profundum (strain SS9).